Consider the following 329-residue polypeptide: Ubiquinol oxidase 1c, mitochondrial (329 aa).

The N-terminal 45 residues, 1-45 (MITTLLRRSLLDASKQATSINGILFHQLAPAKYFRVPAVGGLRDF), are a transit peptide targeting the mitochondrion. Residues 154 to 174 (AIMLETVAAVPGMVGGMLMHF) traverse the membrane as a helical segment. Positions 158, 197, and 200 each coordinate Fe cation. The helical transmembrane segment at 216 to 236 (ALVISVQGVFFNAYLIGYIIS) threads the bilayer. Positions 248, 299, and 302 each coordinate Fe cation.

Belongs to the alternative oxidase family. As to quaternary structure, homodimer; disulfide-linked. Requires Fe cation as cofactor. Expressed in roots, stems, leaves, cotyledons and flowers. High expression in stamens.

It is found in the mitochondrion inner membrane. It catalyses the reaction 2 a ubiquinol + O2 = 2 a ubiquinone + 2 H2O. Its function is as follows. Catalyzes the cyanide-resistant oxidation of ubiquinol and the reduction of molecular oxygen to water, but does not translocate protons and consequently is not linked to oxidative phosphorylation. May increase respiration when the cytochrome respiratory pathway is restricted, or in response to low temperatures. The chain is Ubiquinol oxidase 1c, mitochondrial (AOX1C) from Arabidopsis thaliana (Mouse-ear cress).